Here is an 808-residue protein sequence, read N- to C-terminus: Probable mannosyl-oligosaccharide glucosidase (808 aa).

At 1–11 (MVSDMLGGNKR) the chain is on the cytoplasmic side. A helical; Signal-anchor for type II membrane protein membrane pass occupies residues 12–31 (WILFGLLSFLLNCVLVSCSV). Topologically, residues 32–808 (EDIEKAANDS…LVVNIMSENY (777 aa)) are lumenal. N-linked (GlcNAc...) asparagine glycosylation is present at Asn-39. Asp-580 serves as the catalytic Proton donor. Catalysis depends on Glu-778, which acts as the Proton acceptor.

The protein belongs to the glycosyl hydrolase 63 family.

It is found in the endoplasmic reticulum membrane. It carries out the reaction N(4)-(alpha-D-Glc-(1-&gt;2)-alpha-D-Glc-(1-&gt;3)-alpha-D-Glc-(1-&gt;3)-alpha-D-Man-(1-&gt;2)-alpha-D-Man-(1-&gt;2)-alpha-D-Man-(1-&gt;3)-[alpha-D-Man-(1-&gt;2)-alpha-D-Man-(1-&gt;3)-[alpha-D-Man-(1-&gt;2)-alpha-D-Man-(1-&gt;6)]-alpha-D-Man-(1-&gt;6)]-beta-D-Man-(1-&gt;4)-beta-D-GlcNAc-(1-&gt;4)-beta-D-GlcNAc)-L-asparaginyl-[protein] + H2O = N(4)-(alpha-D-Glc-(1-&gt;3)-alpha-D-Glc-(1-&gt;3)-alpha-D-Man-(1-&gt;2)-alpha-D-Man-(1-&gt;2)-alpha-D-Man-(1-&gt;3)-[alpha-D-Man-(1-&gt;2)-alpha-D-Man-(1-&gt;3)-[alpha-D-Man-(1-&gt;2)-alpha-D-Man-(1-&gt;6)]-alpha-D-Man-(1-&gt;6)]-beta-D-Man-(1-&gt;4)-beta-D-GlcNAc-(1-&gt;4)-beta-D-GlcNAc)-L-asparaginyl-[protein] + beta-D-glucose. In terms of biological role, cleaves the distal alpha 1,2-linked glucose residue from the Glc(3)Man(9)GlcNAc(2) oligosaccharide precursor highly specifically. The chain is Probable mannosyl-oligosaccharide glucosidase from Schizosaccharomyces pombe (strain 972 / ATCC 24843) (Fission yeast).